Reading from the N-terminus, the 310-residue chain is RNA exonuclease 4 (310 aa).

Polar residues predominate over residues Met-1–Lys-11. Residues Met-1–Arg-107 are disordered. Composition is skewed to basic and acidic residues over residues Gln-44 to Lys-53 and Met-61 to Asp-70. Positions His-83–Gln-93 are enriched in polar residues. A compositionally biased stretch (basic and acidic residues) spans Ser-94 to Glu-105. Residues Lys-115–Arg-277 form the Exonuclease domain. Positions Val-287 to Arg-310 are disordered. Positions Val-288 to Lys-299 are enriched in basic and acidic residues. A compositionally biased stretch (basic residues) spans Lys-300–Arg-310.

The protein belongs to the REXO4 family.

The protein resides in the nucleus. Exoribonuclease involved in ribosome biosynthesis. Involved in the processing of ITS1, the internal transcribed spacer localized between the 18S and 5.8S rRNAs. This Aspergillus fumigatus (strain ATCC MYA-4609 / CBS 101355 / FGSC A1100 / Af293) (Neosartorya fumigata) protein is RNA exonuclease 4 (rex4).